Reading from the N-terminus, the 60-residue chain is Large ribosomal subunit protein bL32 (60 aa).

Belongs to the bacterial ribosomal protein bL32 family.

The sequence is that of Large ribosomal subunit protein bL32 from Pseudothermotoga lettingae (strain ATCC BAA-301 / DSM 14385 / NBRC 107922 / TMO) (Thermotoga lettingae).